The following is a 382-amino-acid chain: Bifunctional enzyme IspD/IspF (382 aa).

The 2-C-methyl-D-erythritol 4-phosphate cytidylyltransferase stretch occupies residues 1–225; it reads MTGKPSIAAL…AEERMAMISR (225 aa). The interval 225–382 is 2-C-methyl-D-erythritol 2,4-cyclodiphosphate synthase; the sequence is RTAMGFDVHG…AVATVRVPSI (158 aa). The a divalent metal cation site is built by D231 and H233. 4-CDP-2-C-methyl-D-erythritol 2-phosphate-binding positions include 231-233 and 257-258; these read DVH and HS. H265 serves as a coordination point for a divalent metal cation. 4-CDP-2-C-methyl-D-erythritol 2-phosphate is bound by residues 279–281, 355–358, F362, and R365; these read DIG and TTTE.

This sequence in the N-terminal section; belongs to the IspD/TarI cytidylyltransferase family. IspD subfamily. In the C-terminal section; belongs to the IspF family. Requires a divalent metal cation as cofactor.

It carries out the reaction 2-C-methyl-D-erythritol 4-phosphate + CTP + H(+) = 4-CDP-2-C-methyl-D-erythritol + diphosphate. The enzyme catalyses 4-CDP-2-C-methyl-D-erythritol 2-phosphate = 2-C-methyl-D-erythritol 2,4-cyclic diphosphate + CMP. It functions in the pathway isoprenoid biosynthesis; isopentenyl diphosphate biosynthesis via DXP pathway; isopentenyl diphosphate from 1-deoxy-D-xylulose 5-phosphate: step 2/6. Its pathway is isoprenoid biosynthesis; isopentenyl diphosphate biosynthesis via DXP pathway; isopentenyl diphosphate from 1-deoxy-D-xylulose 5-phosphate: step 4/6. Its function is as follows. Bifunctional enzyme that catalyzes the formation of 4-diphosphocytidyl-2-C-methyl-D-erythritol from CTP and 2-C-methyl-D-erythritol 4-phosphate (MEP) (IspD), and catalyzes the conversion of 4-diphosphocytidyl-2-C-methyl-D-erythritol 2-phosphate (CDP-ME2P) to 2-C-methyl-D-erythritol 2,4-cyclodiphosphate (ME-CPP) with a corresponding release of cytidine 5-monophosphate (CMP) (IspF). This is Bifunctional enzyme IspD/IspF from Rhizorhabdus wittichii (strain DSM 6014 / CCUG 31198 / JCM 15750 / NBRC 105917 / EY 4224 / RW1) (Sphingomonas wittichii).